Reading from the N-terminus, the 20-residue chain is Calreticulin (20 aa).

This sequence belongs to the calreticulin family. Post-translationally, glycosylated.

The protein localises to the endoplasmic reticulum lumen. Functionally, molecular calcium-binding chaperone promoting folding, oligomeric assembly and quality control in the ER via the calreticulin/calnexin cycle. This lectin may interact transiently with almost all of the monoglucosylated glycoproteins that are synthesized in the ER. The chain is Calreticulin from Spinacia oleracea (Spinach).